A 248-amino-acid chain; its full sequence is tRNA (guanine-N(1)-)-methyltransferase (248 aa).

S-adenosyl-L-methionine is bound by residues glycine 117 and 137–142; that span reads IGDFVL.

This sequence belongs to the RNA methyltransferase TrmD family. As to quaternary structure, homodimer.

The protein resides in the cytoplasm. It carries out the reaction guanosine(37) in tRNA + S-adenosyl-L-methionine = N(1)-methylguanosine(37) in tRNA + S-adenosyl-L-homocysteine + H(+). Its function is as follows. Specifically methylates guanosine-37 in various tRNAs. This chain is tRNA (guanine-N(1)-)-methyltransferase, found in Polynucleobacter asymbioticus (strain DSM 18221 / CIP 109841 / QLW-P1DMWA-1) (Polynucleobacter necessarius subsp. asymbioticus).